The sequence spans 1128 residues: Mastermind-like protein 2 (1128 aa).

Disordered regions lie at residues 1-22 (MGDTAPPQAPTGGLGGAPGAGL) and 81-167 (QHGQ…GDQR). Gly residues predominate over residues 12-22 (GGLGGAPGAGL). A compositionally biased stretch (low complexity) spans 113–122 (PTASQTAAPA). Ser-177 carries the phosphoserine modification. 5 disordered regions span residues 343–509 (FNID…GSNQ), 521–649 (SPSA…SNQP), 677–714 (QVSQQHRQDQHSVVGQNAGPSPSPNPCSNPNTGSGYMN), 758–794 (QDQINRHLTRPPPDYKDQRRNVGNMQPTAQYSGGSST), and 1039–1073 (GTGLSQSRTVSQPPSLAAGGFPSPNQSSRAFQGTD). 2 stretches are compositionally biased toward polar residues: residues 347-357 (LGQQSQRSTPR) and 374-387 (GLTQGPSGSPQLRP). Residues 395 to 426 (SMASSGLSASSPIPSVPQSQAQPPPATGAARA) are compositionally biased toward low complexity. A compositionally biased stretch (polar residues) spans 431-446 (QEVSHAQQLKQIAANR). 2 stretches are compositionally biased toward low complexity: residues 453-473 (HQQQQQHQPTSWPALPSSAGP) and 484-497 (PSPSFGQQPFSPQS). Residues 566–584 (NSDQANQQMPSVLPSQSKP) show a composition bias toward polar residues. Residues 590 to 649 (TQQQPQQSSITVQPQQQQQQPQQQQQPQQQQQPQPQQQQQQQPQAQQPAAQPTQPLSNQP) show a composition bias toward low complexity. 3 stretches are compositionally biased toward polar residues: residues 677–695 (QVSQQHRQDQHSVVGQNAG), 778–794 (NVGNMQPTAQYSGGSST), and 1039–1052 (GTGLSQSRTVSQPP).

It belongs to the mastermind family. In terms of assembly, interacts through its N-terminal region with the ankyrin repeat region of the Notch proteins NOTCH1, NOTCH2, NOTCH3 and NOTCH4. Forms a DNA-binding complex with Notch proteins and RBPSUH/RBP-J kappa.

It localises to the nucleus speckle. Acts as a transcriptional coactivator for NOTCH proteins. Has been shown to amplify NOTCH-induced transcription of HES1. Potentiates activation by NOTCH3 and NOTCH4 more efficiently than MAML1 or MAML3. This is Mastermind-like protein 2 (MAML2) from Bos taurus (Bovine).